Reading from the N-terminus, the 397-residue chain is Cell division protein DivIB (397 aa).

Over 1–138 (MTTKDKGDQK…RIERIHLYRA (138 aa)) the chain is Cytoplasmic. Residues 24-37 (QEYLEKKSQEKASE) show a composition bias toward basic and acidic residues. The tract at residues 24 to 115 (QEYLEKKSQE…DRTEKFIGQA (92 aa)) is disordered. Residues 74 to 103 (ASDDDETNESEESEDVEEPEEENIEESSDV) are compositionally biased toward acidic residues. Residues 139 to 159 (LPVLVISSLLILLSLYFITPL) form a helical membrane-spanning segment. In terms of domain architecture, POTRA spans 160–231 (GSLKNLVVTG…ITFKIQVTEY (72 aa)). Over 160 to 397 (GSLKNLVVTG…PSDVTDETNN (238 aa)) the chain is Extracellular. Residues 360-397 (LVQKEEQDQEQEKEESSEETVPGETEAAPSDVTDETNN) form a disordered region. Acidic residues predominate over residues 366 to 377 (QDQEQEKEESSE).

Belongs to the FtsQ/DivIB family. DivIB subfamily.

It localises to the cell membrane. In terms of biological role, cell division protein that may be involved in stabilizing or promoting the assembly of the division complex. The polypeptide is Cell division protein DivIB (Streptococcus gordonii (strain Challis / ATCC 35105 / BCRC 15272 / CH1 / DL1 / V288)).